The primary structure comprises 352 residues: Rhodopsin, deep-sea form (352 aa).

Topologically, residues 1–36 (MNGTEGPNFYIPMSNITGVVRSPFEYPQYYLAEPWA) are extracellular. 2 N-linked (GlcNAc...) asparagine glycosylation sites follow: Asn2 and Asn15. A helical transmembrane segment spans residues 37 to 61 (YTILAAYMFTLILLGFPVNFLTLYV). Residues 62–73 (TIEHKKLRTPLN) are Cytoplasmic-facing. The helical transmembrane segment at 74 to 98 (YILLNLAVANLFMVFGGFTTTVYTS) threads the bilayer. At 99-113 (MHGYFVFGETGCNLE) the chain is on the extracellular side. The cysteines at positions 110 and 187 are disulfide-linked. The helical transmembrane segment at 114-133 (GYFATLGGEISLWSLVVLAI) threads the bilayer. Residues 134–152 (ERWVVVCKPMSNFRFGENH) lie on the Cytoplasmic side of the membrane. Residues 153–176 (AIMGLAFTWIMANSCAMPPLFGWS) traverse the membrane as a helical segment. At 177 to 202 (RYIPEGMQCSCGVDYYTLKPEVNNES) the chain is on the extracellular side. Asn200 carries an N-linked (GlcNAc...) asparagine glycan. A helical membrane pass occupies residues 203-230 (FVIYMFIVHFSVPLTIISFCYGRLVCTV). The Cytoplasmic portion of the chain corresponds to 231–252 (KEAAAQQQESETTQRAEREVTR). A helical membrane pass occupies residues 253–276 (MVVIMVIAFLVCWVPYASVAWYIF). Over 277-284 (THQGSTFG) the chain is Extracellular. The chain crosses the membrane as a helical span at residues 285 to 309 (PVFMTVPSFFAKSSAIYNPLIYICL). Lys296 carries the post-translational modification N6-(retinylidene)lysine. Residues 310 to 352 (NSQFRNCMITTLFCGKNPFQEEEGASTTASKTEASSVSSVSPA) lie on the Cytoplasmic side of the membrane. Residue Cys323 is the site of S-palmitoyl cysteine attachment. Positions 333 to 352 (GASTTASKTEASSVSSVSPA) are disordered. Residues 334-352 (ASTTASKTEASSVSSVSPA) show a composition bias toward low complexity.

The protein belongs to the G-protein coupled receptor 1 family. Opsin subfamily. Post-translationally, phosphorylated on some or all of the serine and threonine residues present in the C-terminal region. Rod shaped photoreceptor cells which mediates vision in dim light.

The protein localises to the membrane. Visual pigments such as rhodopsin and porphyropsin are light-absorbing molecules that mediate vision. Rhodopsin consists of an apoprotein, opsin, covalently linked to 11-cis-retinal. This receptor is coupled to the activation of phospholipase C. Porphyropsin consists of opsin covalently linked to 11-cis 3,4-didehydroretinal. The polypeptide is Rhodopsin, deep-sea form (Anguilla anguilla (European freshwater eel)).